Reading from the N-terminus, the 1272-residue chain is Myosin-3 (1272 aa).

The interval 1–20 is disordered; sequence MAVIKKGARRKDVKEPKKRS. The Myosin motor domain maps to 36–715; the sequence is VGISDLTLLS…SLFALEDMRD (680 aa). 129–136 contacts ATP; it reads GESGAGKT. Serine 357 is modified (phosphoserine). The tract at residues 588 to 610 is actin-binding; that stretch reads ANELVETLSKAEPSYIRTIKPNQ. IQ domains are found at residues 719–739 and 740–765; these read YNMA…RIDA and AIKI…YGTK. Residues 771 to 961 enclose the TH1 domain; that stretch reads KERRSMSLLG…TIYVRRGHPA (191 aa). Disordered stretches follow at residues 951-1015, 1029-1141, and 1217-1272; these read STIY…QKPV, YNPK…SELP, and VQFG…DDDW. Residues 980–1000 show a composition bias toward basic residues; it reads IKSKKSKHKSTHKHTHSHRSH. The span at 1066 to 1078 shows a compositional bias: low complexity; that stretch reads KKASSSHKSSSAK. Over residues 1089-1098 the composition is skewed to basic and acidic residues; it reads GVEKNKEPLK. Residues 1109-1118 show a composition bias toward pro residues; the sequence is PIPPPPPPMG. One can recognise an SH3 domain in the interval 1120 to 1182; sequence PKDPKFEAAY…PTAYMTPYKD (63 aa). Residues 1217 to 1236 are compositionally biased toward polar residues; sequence VQFGSATVGPTSDNQSNPVG. The segment covering 1258–1272 has biased composition (acidic residues); it reads ADDDDNDDGDDDDDW.

The protein belongs to the TRAFAC class myosin-kinesin ATPase superfamily. Myosin family. In terms of assembly, interacts (via myosin motor domain) with SHE4; this interaction is important for proper localization and may regulate the interaction of the motor domain with actin. Interacts (via SH3 domain) with VRP1; this interaction is required for localization to sites of polarized growth and may regulate the interaction of the tail domain with actin. Interacts (via SH3 domain) with PAN1; this interaction is important for late stages of endocytopsis. Interacts (via SH3 domain) with BBC1 and LAS17. Interacts (via C-terminal acidic tail) with ARC19 and ARC40; ARC19 and ARC40 are Arp2/3 complex subunits. Post-translationally, phosphorylation of the TEDS site (Ser-357) is required for the polarization of the actin cytoskeleton and for ligand-induced, but not for constitutive internalization of STE2. Phosphorylation probably activates the myosin-I ATPase. Ser-357 is phosphorylated by CLA4 and STE20 in vitro.

The protein localises to the cytoplasm. It localises to the cytoskeleton. Its subcellular location is the actin patch. Its function is as follows. One of two redundant type-I myosins implicated in the organization of the actin cytoskeleton. Required for proper actin cytoskeleton polarization and for the internalization step in endocytosis. At the cell cortex, assembles in patch-like structures together with proteins from the actin-polymerizing machinery and promotes actin assembly. Functions redundantly with LAS17 as actin nucleation-promoting factor (NPF) for the Arp2/3 complex. Motor domain phosphorylation by PAK kinases CLA4 and STE20 promotes CDC42-regulated actin assembly. Functions together with the NPF PAN1 in late stages of endocytosis. Motor domain phosphorylation by PDK1 kinases PKH1 and PKH2, and by SGK kinases YPK1 and YPK2, promotes ligand-induced, but not constitutive endocytosis of the G protein-coupled receptor STE2. The polypeptide is Myosin-3 (MYO3) (Saccharomyces cerevisiae (strain ATCC 204508 / S288c) (Baker's yeast)).